Here is a 649-residue protein sequence, read N- to C-terminus: Golgin subfamily A member 6-like protein 26 (649 aa).

5 disordered regions span residues 1–94 (MWPQ…HQEA), 300–330 (QEEKIREQEEKMRRQEEMMWEKEEKMRRQEE), 358–440 (EKMH…EMWR), 455–572 (KEKM…REQE), and 584–620 (EQEEMMQEQEEKMWEQEEKMCEQEEKMQEQEEKMRRQ). Low complexity predominate over residues 10 to 23 (HPHLPTHPHLPTHP). Positions 25-46 (MSKETRQSKLAEAKEQLTDHHP) are enriched in basic and acidic residues. Polar residues-rich tracts occupy residues 47 to 57 (QTNPSVGTAAS) and 65 to 77 (NNGTNPETTTSGG). The segment covering 80–94 (SPEDEQKASHQHQEA) has biased composition (basic and acidic residues). The stretch at 151 to 644 (LEQALSAVAT…EEKMQEHQEH (494 aa)) forms a coiled coil.

It belongs to the GOLGA6 family.

In Homo sapiens (Human), this protein is Golgin subfamily A member 6-like protein 26 (GOLGA6L26).